We begin with the raw amino-acid sequence, 293 residues long: 4-diphosphocytidyl-2-C-methyl-D-erythritol kinase (293 aa).

Residue Lys16 is part of the active site. 99–109 contributes to the ATP binding site; the sequence is PMGAGLGGGSS. The active site involves Asp141.

It belongs to the GHMP kinase family. IspE subfamily.

The enzyme catalyses 4-CDP-2-C-methyl-D-erythritol + ATP = 4-CDP-2-C-methyl-D-erythritol 2-phosphate + ADP + H(+). The protein operates within isoprenoid biosynthesis; isopentenyl diphosphate biosynthesis via DXP pathway; isopentenyl diphosphate from 1-deoxy-D-xylulose 5-phosphate: step 3/6. Functionally, catalyzes the phosphorylation of the position 2 hydroxy group of 4-diphosphocytidyl-2C-methyl-D-erythritol. The chain is 4-diphosphocytidyl-2-C-methyl-D-erythritol kinase from Burkholderia mallei (strain NCTC 10247).